A 217-amino-acid polypeptide reads, in one-letter code: MYGESLVKLMLALDVMDEKKAVLIAKETSEYVDSIKIGYPLVLATGLNIIDKIKEATNKEVICDFKVADIPSTNEKIAELTLNHADGIICQGFVGSDSVSAILNVGKAKNKKVIMVTEMSHPGATEYLQNVAEDMAKMADRLKVDGIVAPSTRPERLEEIKSIAKDAFVISPGVGAQGGNLSDVLNVLSENDYVIIGRAIYENENPKEMAKKYRMQM.

Substrate is bound by residues Asp-14, Lys-36, Asp-64 to Thr-73, Ser-120, Pro-172 to Ser-182, Gly-197, and Arg-198. The active-site Proton donor is the Lys-66.

This sequence belongs to the OMP decarboxylase family. Type 1 subfamily. In terms of assembly, homodimer.

It carries out the reaction orotidine 5'-phosphate + H(+) = UMP + CO2. It participates in pyrimidine metabolism; UMP biosynthesis via de novo pathway; UMP from orotate: step 2/2. In terms of biological role, catalyzes the decarboxylation of orotidine 5'-monophosphate (OMP) to uridine 5'-monophosphate (UMP). This chain is Orotidine 5'-phosphate decarboxylase, found in Methanococcus maripaludis (strain C6 / ATCC BAA-1332).